Here is a 538-residue protein sequence, read N- to C-terminus: Diacylglycerol O-acyltransferase 1-1 (538 aa).

2 disordered regions span residues 1–39 (MVGS…GAIV) and 54–106 (AAAA…GGGR). The segment covering 69–83 (EAASGEPSSSSSSSP) has biased composition (low complexity). The next 7 membrane-spanning stretches (helical) occupy residues 136–156 (AIFK…LVAV), 186–206 (WPLL…FAVE), 218–238 (VATC…VLVI), 245–265 (VLSG…LVSF), 293–313 (NLQP…TLCY), 326–346 (GWLI…GFII), and 382–402 (LWLC…AEIL). Positions 409–415 (FYKDWWN) match the FYXDWWN motif motif. Helical transmembrane passes span 451–471 (VAVL…VAVP), 474–494 (ILKF…VLTA), and 505–525 (VGNM…CLLL). Residue His-464 is part of the active site.

It belongs to the membrane-bound acyltransferase family. Sterol o-acyltransferase subfamily.

The protein localises to the endoplasmic reticulum membrane. The catalysed reaction is an acyl-CoA + a 1,2-diacyl-sn-glycerol = a triacyl-sn-glycerol + CoA. It functions in the pathway glycerolipid metabolism; triacylglycerol biosynthesis. In terms of biological role, involved in triacylglycerol (TAG) synthesis. Catalyzes the acylation of the sn-3 hydroxy group of sn-1,2-diacylglycerol using acyl-CoA. This chain is Diacylglycerol O-acyltransferase 1-1, found in Oryza sativa subsp. japonica (Rice).